Here is a 354-residue protein sequence, read N- to C-terminus: S-adenosylmethionine:tRNA ribosyltransferase-isomerase (354 aa).

It belongs to the QueA family. In terms of assembly, monomer.

The protein localises to the cytoplasm. It carries out the reaction 7-aminomethyl-7-carbaguanosine(34) in tRNA + S-adenosyl-L-methionine = epoxyqueuosine(34) in tRNA + adenine + L-methionine + 2 H(+). It participates in tRNA modification; tRNA-queuosine biosynthesis. Functionally, transfers and isomerizes the ribose moiety from AdoMet to the 7-aminomethyl group of 7-deazaguanine (preQ1-tRNA) to give epoxyqueuosine (oQ-tRNA). The polypeptide is S-adenosylmethionine:tRNA ribosyltransferase-isomerase (Pseudomonas savastanoi pv. phaseolicola (strain 1448A / Race 6) (Pseudomonas syringae pv. phaseolicola (strain 1448A / Race 6))).